The sequence spans 307 residues: ATP-dependent (S)-NAD(P)H-hydrate dehydratase (307 aa).

One can recognise a YjeF C-terminal domain in the interval 1-291 (MDHFLKLLPK…DEIPKLVRDV (291 aa)). Residues glycine 96 and 150–156 (NIVEFSR) each bind (6S)-NADPHX. ATP is bound by residues 194 to 198 (KGEVD) and 214 to 223 (SSLRRCGGQG). Aspartate 224 is a (6S)-NADPHX binding site.

The protein belongs to the NnrD/CARKD family. It depends on Mg(2+) as a cofactor.

The catalysed reaction is (6S)-NADHX + ATP = ADP + phosphate + NADH + H(+). It catalyses the reaction (6S)-NADPHX + ATP = ADP + phosphate + NADPH + H(+). Its function is as follows. Catalyzes the dehydration of the S-form of NAD(P)HX at the expense of ATP, which is converted to ADP. Together with NAD(P)HX epimerase, which catalyzes the epimerization of the S- and R-forms, the enzyme allows the repair of both epimers of NAD(P)HX, a damaged form of NAD(P)H that is a result of enzymatic or heat-dependent hydration. This Caenorhabditis briggsae protein is ATP-dependent (S)-NAD(P)H-hydrate dehydratase.